Here is an 874-residue protein sequence, read N- to C-terminus: Ribosome biogenesis protein ERB1 (874 aa).

Positions 1-148 are disordered; it reads MAKKEVSASK…DAFAAADAAT (148 aa). The span at 27-41 shows a compositional bias: basic and acidic residues; the sequence is QAVEKEEAEKEKEEG. Residues 55-77 are compositionally biased toward acidic residues; sequence PESDSDDEGAAAAEEEEEEEEQQ. A compositionally biased stretch (basic and acidic residues) spans 78 to 89; that stretch reads QDVKELDLDKGE. Composition is skewed to acidic residues over residues 95–104 and 128–139; these read SDAEDFDSEE and PKEDGDEQDEQD. Residues 312–429 form a required for interaction with NOP7 region; that stretch reads RFVPSKHEAK…LRLVPGYQDS (118 aa). The required for interaction with YTM1 stretch occupies residues 429–465; the sequence is SVRERFERSLDLYLAPRLRKNKLNIDPESLIPELPSP. WD repeat units follow at residues 481 to 520 and 529 to 569; these read GHTGKIRTLSIDPQGLWLATGSDDGSVRIWEVLTGRQVFK and NGED…FEIE. The span at 593-602 shows a compositional bias: basic and acidic residues; the sequence is KVKGEDTKGD. A disordered region spans residues 593–640; it reads KVKGEDTKGDLDDDEEEEEEEEDDDDDEGQGKVKAHNSTAPAKKDVAK. The segment covering 603 to 620 has biased composition (acidic residues); that stretch reads LDDDEEEEEEEEDDDDDE. WD repeat units lie at residues 658 to 700, 703 to 741, 744 to 783, 787 to 827, and 843 to 874; these read QCRR…SQSP, KSKGVIMDAKFHPFKPQLFVASQRQIKIYDLAQQTLLKK, PGVRLLSTIDLHPRGDNLLAASYDKRVLWHDLDLAATPYK, YHEK…DLMT, and INQIGVLDIVWHPKEAWLFSAGADGTARLWTT.

It belongs to the WD repeat BOP1/ERB1 family. Component of the NOP7 complex, composed of ERB1, NOP7 and YTM1. The complex is held together by ERB1, which interacts with NOP7 via its N-terminal domain and with YTM1 via a high-affinity interaction between the seven-bladed beta-propeller domains of the 2 proteins. The NOP7 complex associates with the 66S pre-ribosome.

Its subcellular location is the nucleus. The protein localises to the nucleolus. The protein resides in the nucleoplasm. Component of the NOP7 complex, which is required for maturation of the 25S and 5.8S ribosomal RNAs and formation of the 60S ribosome. The chain is Ribosome biogenesis protein ERB1 from Lodderomyces elongisporus (strain ATCC 11503 / CBS 2605 / JCM 1781 / NBRC 1676 / NRRL YB-4239) (Yeast).